The sequence spans 862 residues: Short transient receptor potential channel 7 (862 aa).

The segment at 1–21 (MLGSNTFKNMQRRHTTLREKG) is disordered. At 1 to 351 (MLGSNTFKNM…GLRQQSIAVK (351 aa)) the chain is on the cytoplasmic side. Residues 10-21 (MQRRHTTLREKG) show a composition bias toward basic residues. Phosphothreonine; by PKG/PRKG1 is present on threonine 15. 4 ANK repeats span residues 42–71 (PEEERFLDSAEYGNIPVVRKMLEESKTLNF), 77–106 (MGQNALQLAVGNEHLEVTELLLKKENLARV), 108–134 (DALLLAISKGYVRIVEAILSHPAFAQG), and 163–192 (HDITPIILAAHCQEYEIVHILLLKGARIER). Residues 352 to 372 (FLAVFGVSIGLPFLAIAYWIA) traverse the membrane as a helical segment. Residues 373 to 383 (PCSKLGQTLRS) are Extracellular-facing. A helical membrane pass occupies residues 384-404 (PFMKFVAHAVSFTIFLGLLVV). The Cytoplasmic segment spans residues 405 to 465 (NASDRFEGVK…KEIWEEGPRE (61 aa)). Residues 466–486 (YVLHLWNLLDFGMLSIFVASF) form a helical membrane-spanning segment. Residues 487 to 537 (TARFMAFLKASEAQLYVDQYVQDVTLHNVSLPPEVAYFTYARDKWWPSDPQ) lie on the Extracellular side of the membrane. Residue asparagine 514 is glycosylated (N-linked (GlcNAc...) asparagine). Residues 538 to 558 (IISEGLYAIAVVLSFSRIAYI) form a helical membrane-spanning segment. At 559–581 (LPANESFGPLQISLGRTVKDIFK) the chain is on the cytoplasmic side. Residues 582–602 (FMVIFIMVFVAFMIGMFNLYS) form a helical membrane-spanning segment. The Extracellular portion of the chain corresponds to 603–651 (YYRGAKYNPAFTTVEESFKTLFWSIFGLSEVISVVLKYDHKFIENIGYV). Residues 652-672 (LYGVYNVTMVVVLLNMLIAMI) traverse the membrane as a helical segment. Residues 673 to 862 (NNSYQEIEED…HLRVNQGKDI (190 aa)) are Cytoplasmic-facing.

The protein belongs to the transient receptor (TC 1.A.4) family. STrpC subfamily. TRPC7 sub-subfamily. In terms of assembly, interacts with MX1 and RNF24. Interacts (via ANK-repeat domains) with PRKG1. Phosphorylation by PRKG1 at Thr-15 negatively regulates TRPC7 activity.

The protein resides in the cell membrane. It is found in the nucleus envelope. The enzyme catalyses Ca(2+)(in) = Ca(2+)(out). Its function is as follows. Forms a receptor-activated non-selective calcium permeant cation channel. Probably is operated by a phosphatidylinositol second messenger system activated by receptor tyrosine kinases or G-protein coupled receptors. Activated by diacylglycerol (DAG). May also be activated by intracellular calcium store depletion. The chain is Short transient receptor potential channel 7 (Trpc7) from Mus musculus (Mouse).